The primary structure comprises 267 residues: 3-methyl-2-oxobutanoate hydroxymethyltransferase (267 aa).

Mg(2+)-binding residues include Asp-42 and Asp-86. 3-methyl-2-oxobutanoate contacts are provided by residues 42–43, Asp-86, and Lys-116; that span reads DS. Residue Glu-118 participates in Mg(2+) binding. Glu-185 serves as the catalytic Proton acceptor.

It belongs to the PanB family. Homodecamer; pentamer of dimers. It depends on Mg(2+) as a cofactor.

It localises to the cytoplasm. The enzyme catalyses 3-methyl-2-oxobutanoate + (6R)-5,10-methylene-5,6,7,8-tetrahydrofolate + H2O = 2-dehydropantoate + (6S)-5,6,7,8-tetrahydrofolate. Its pathway is cofactor biosynthesis; (R)-pantothenate biosynthesis; (R)-pantoate from 3-methyl-2-oxobutanoate: step 1/2. Its function is as follows. Catalyzes the reversible reaction in which hydroxymethyl group from 5,10-methylenetetrahydrofolate is transferred onto alpha-ketoisovalerate to form ketopantoate. The chain is 3-methyl-2-oxobutanoate hydroxymethyltransferase from Parasynechococcus marenigrum (strain WH8102).